A 150-amino-acid polypeptide reads, in one-letter code: Deoxyuridine 5'-triphosphate nucleotidohydrolase (150 aa).

Substrate-binding positions include 68-70, N81, 85-87, and K95; these read RSG and TID.

This sequence belongs to the dUTPase family. It depends on Mg(2+) as a cofactor.

The catalysed reaction is dUTP + H2O = dUMP + diphosphate + H(+). It participates in pyrimidine metabolism; dUMP biosynthesis; dUMP from dCTP (dUTP route): step 2/2. Functionally, this enzyme is involved in nucleotide metabolism: it produces dUMP, the immediate precursor of thymidine nucleotides and it decreases the intracellular concentration of dUTP so that uracil cannot be incorporated into DNA. The polypeptide is Deoxyuridine 5'-triphosphate nucleotidohydrolase (Rickettsia bellii (strain OSU 85-389)).